A 245-amino-acid polypeptide reads, in one-letter code: TLC domain-containing protein 5 (245 aa).

The next 6 membrane-spanning stretches (helical) occupy residues 1–21, 38–58, 75–95, 99–119, 162–182, and 191–211; these read MALALCLQVLCSLCGWLSLYI, LVTFTHGVLSIGLSAYIGFID, VHVLCLTLGYFIFDLGWCVYF, GALMLAHHTLSILGIIMALVL, FLFVALFTGVRIGVGACLLFC, and WFVKAGGVAMYAVSWCFMFSI. In terms of domain architecture, TLC spans 29–204; sequence HRSYEWSCRL…AGGVAMYAVS (176 aa).

This sequence belongs to the TLCD5 family.

It is found in the membrane. The sequence is that of TLC domain-containing protein 5 from Homo sapiens (Human).